The chain runs to 658 residues: ATP-dependent RNA helicase DDX3Y (658 aa).

A compositionally biased stretch (basic and acidic residues) spans 1–10 (MSHVVVKNDP). The interval 1–141 (MSHVVVKNDP…DDWSKPLPPS (141 aa)) is disordered. At Ser2 the chain carries N-acetylserine. Residues 15 to 34 (QLANLDLNSEKQSGGASTAS) are compositionally biased toward polar residues. Residues 44 to 68 (RNREASKGFHDKDSSGWSCSKDKDA) show a composition bias toward basic and acidic residues. Position 55 is an N6-acetyllysine (Lys55). Residues Ser81, Ser85, and Ser89 each carry the phosphoserine modification. Residues 93-128 (GRFDDRGRSDYDGIGNRDRPGFGRFERSGHSRWCDK) show a composition bias toward basic and acidic residues. Arg100 is subject to Omega-N-methylarginine. At Ser101 the chain carries Phosphoserine. Tyr103 bears the Phosphotyrosine mark. Arg109 carries the post-translational modification Omega-N-methylarginine. A phosphoserine mark is found at Ser129 and Ser181. Positions 178–206 (ENFSDIDMGEIIMGNIELTRYTRPTPVQK) match the Q motif motif. 198 to 205 (YTRPTPVQ) is a binding site for ATP. The Helicase ATP-binding domain maps to 209 to 401 (IPIIKGKRDL…RDFLDEYIFL (193 aa)). Lys213 is covalently cross-linked (Glycyl lysine isopeptide (Lys-Gly) (interchain with G-Cter in SUMO2)). ATP is bound at residue 222 to 229 (AQTGSGKT). Positions 345 to 348 (DEAD) match the DEAD box motif. The region spanning 412 to 573 (NITQKVVWVE…EVPSWLENMA (162 aa)) is the Helicase C-terminal domain. Ser454 carries the post-translational modification Phosphoserine. Arg588 is subject to Omega-N-methylarginine. A phosphoserine mark is found at Ser590 and Ser601. The interval 597 to 625 (DYRQSSGSSSSGFGASRGSSSRSGGSGYG) is disordered. Positions 601-619 (SSGSSSSGFGASRGSSSRS) are enriched in low complexity. Residues Arg613 and Arg628 each carry the omega-N-methylarginine modification.

This sequence belongs to the DEAD box helicase family. DDX3/DED1 subfamily. As to quaternary structure, may interact with TDRD3.

It localises to the cytoplasm. It is found in the nucleus. It carries out the reaction ATP + H2O = ADP + phosphate + H(+). Its function is as follows. Probable ATP-dependent RNA helicase. May play a role in spermatogenesis. The sequence is that of ATP-dependent RNA helicase DDX3Y (DDX3Y) from Pongo abelii (Sumatran orangutan).